A 228-amino-acid polypeptide reads, in one-letter code: Cutinase (228 aa).

Positions 1–16 are cleaved as a signal peptide; sequence MKFLSIISLAVSLVAA. A disulfide bond links Cys-49 and Cys-129. Ser-140 functions as the Nucleophile in the catalytic mechanism. Cys-191 and Cys-198 are oxidised to a cystine. Asp-195 is a catalytic residue. The active-site Proton donor/acceptor is the His-208.

The protein belongs to the cutinase family. Post-translationally, the 2 disulfide bonds play a critical role in holding the catalytic residues in juxta-position; reduction of the disulfide bridges results in the complete inactivation of the enzyme.

It is found in the secreted. The catalysed reaction is cutin + H2O = cutin monomers.. Partially inhibited by berberine; higher inhibitory effects are observed with longer chain polyester substrates. Functionally, catalyzes the hydrolysis of complex carboxylic polyesters found in the cell wall of plants. Degrades cutin, a macromolecule that forms the structure of the plant cuticle. Allows pathogenic fungi to penetrate through the cuticular barrier into the host plant during the initial stage of fungal infection. The protein is Cutinase (CUTA) of Colletotrichum truncatum (Anthracnose fungus).